We begin with the raw amino-acid sequence, 141 residues long: HTH-type transcriptional repressor NsrR (141 aa).

Positions 2-129 constitute an HTH rrf2-type domain; that stretch reads QLTSFTDYGL…DQYTLADMVK (128 aa). The segment at residues 28–51 is a DNA-binding region (H-T-H motif); it reads ISEVTEVYGVSRNHMVKIINQLSR. The [2Fe-2S] cluster site is built by C91, C96, and C102.

The cofactor is [2Fe-2S] cluster.

In terms of biological role, nitric oxide-sensitive repressor of genes involved in protecting the cell against nitrosative stress. May require iron for activity. This Pectobacterium atrosepticum (strain SCRI 1043 / ATCC BAA-672) (Erwinia carotovora subsp. atroseptica) protein is HTH-type transcriptional repressor NsrR.